We begin with the raw amino-acid sequence, 559 residues long: Pentatricopeptide repeat-containing protein At4g38010 (559 aa).

PPR repeat units follow at residues 70-104 (SSFS…GFSP), 105-139 (DMFT…GFYD), 140-170 (DIYV…MPVR), 171-201 (DVVS…MDVE), 203-233 (NLAT…ILKR), 238-268 (SLET…LEKK), 269-304 (DKVS…GIKP), 305-339 (DGHI…GIKW), 340-370 (DTHI…IRSK), 371-405 (NVFT…GFKP), 406-440 (NLVT…EYNL), and 443-473 (KLEH…MPVK). Residues 478–554 (ICGAILSACK…VPGSSYIEKF (77 aa)) are type E motif.

It belongs to the PPR family. PCMP-E subfamily.

This is Pentatricopeptide repeat-containing protein At4g38010 (PCMP-E45) from Arabidopsis thaliana (Mouse-ear cress).